The sequence spans 396 residues: S-adenosylmethionine synthase (396 aa).

His16 contacts ATP. Asp18 contributes to the Mg(2+) binding site. Position 44 (Glu44) interacts with K(+). Positions 57 and 100 each coordinate L-methionine. The tract at residues 100–110 is flexible loop; sequence QSPDIAQGVDR. ATP-binding positions include 167–169, 232–233, Asp241, 247–248, Ala264, and Lys268; these read DAK, RF, and RK. Asp241 lines the L-methionine pocket. Residue Lys272 coordinates L-methionine.

The protein belongs to the AdoMet synthase family. As to quaternary structure, homotetramer; dimer of dimers. It depends on Mg(2+) as a cofactor. K(+) is required as a cofactor.

The protein localises to the cytoplasm. The enzyme catalyses L-methionine + ATP + H2O = S-adenosyl-L-methionine + phosphate + diphosphate. It participates in amino-acid biosynthesis; S-adenosyl-L-methionine biosynthesis; S-adenosyl-L-methionine from L-methionine: step 1/1. Functionally, catalyzes the formation of S-adenosylmethionine (AdoMet) from methionine and ATP. The overall synthetic reaction is composed of two sequential steps, AdoMet formation and the subsequent tripolyphosphate hydrolysis which occurs prior to release of AdoMet from the enzyme. The chain is S-adenosylmethionine synthase from Ralstonia pickettii (strain 12J).